Here is a 271-residue protein sequence, read N- to C-terminus: Oxamate carbamoyltransferase subunit AllH (271 aa).

The protein belongs to the AllH family. The OXTCase is composed of 3 subunits, AllF, AllG and AllH. The cofactor is Mg(2+).

The enzyme catalyses oxamate + carbamoyl phosphate = N-carbamoyl-2-oxoglycine + phosphate. Its pathway is nitrogen metabolism; (S)-allantoin degradation. Functionally, component of a carbamoyltransferase involved in the anaerobic nitrogen utilization via the assimilation of allantoin. Catalyzes the conversion of oxalurate (N-carbamoyl-2-oxoglycine) to oxamate and carbamoyl phosphate. In Escherichia coli O157:H7, this protein is Oxamate carbamoyltransferase subunit AllH.